A 609-amino-acid polypeptide reads, in one-letter code: Polyadenylate-binding protein 7 (609 aa).

4 consecutive RRM domains span residues 24–102, 112–189, 201–278, and 304–381; these read ASLY…WSVR, GNVF…KFMK, TNLY…RAQK, and SNIY…IAQK. A PABC domain is found at 509–586; the sequence is EMKKSIQQRQ…AFEVLKSSKT (78 aa).

This sequence belongs to the polyadenylate-binding protein type-1 family. Expressed predominantly in siliques.

The protein resides in the cytoplasm. The protein localises to the nucleus. Functionally, binds the poly(A) tail of mRNA. Appears to be an important mediator of the multiple roles of the poly(A) tail in mRNA biogenesis, stability and translation. This chain is Polyadenylate-binding protein 7 (PAB7), found in Arabidopsis thaliana (Mouse-ear cress).